A 407-amino-acid polypeptide reads, in one-letter code: Schlafen-like protein 1 (407 aa).

Disordered stretches follow at residues 1–28 and 137–191; these read MTPMKRSVQTQVSEPFMESWGEESLPEL and AQGP…CQGR. Residues 155–167 show a composition bias toward low complexity; the sequence is GLSPGPSPGSGVP. Residues 181–190 are compositionally biased toward polar residues; sequence QAQQLQSCQG. 261–268 is an ATP binding site; sequence GVEDSGLV. Positions 366–398 form a coiled coil; the sequence is RQRWLVELGKLEEKMKALMMEKEQLQQQLQQHG.

It belongs to the Schlafen family. Subgroup I subfamily.

This is Schlafen-like protein 1 (SLFNL1) from Homo sapiens (Human).